A 360-amino-acid polypeptide reads, in one-letter code: Phospho-N-acetylmuramoyl-pentapeptide-transferase (360 aa).

Helical transmembrane passes span 25 to 45 (RGILGVLTALVLSLWMGPWLI), 74 to 94 (MGGALILSAIGISTLLWADLA), 97 to 117 (YVWVVLAVTLLFGAIGWVDDY), 132 to 152 (WKYFWQSVFGLGAAIFLYMTA), 168 to 188 (IEIPLGIGFVILTYFVIVGSS), 199 to 219 (GLAIMPTVMVGGGLGIFCYLS), 236 to 256 (SGELIVFCGALIGAGLGFLWF), 263 to 283 (VFMGDVGALALGAALGTIAVI), 288 to 308 (VVLFIMGGVFVMETLSVMIQV), and 338 to 358 (VIVRFWIITVILVLVGLATLK).

The protein belongs to the glycosyltransferase 4 family. MraY subfamily. It depends on Mg(2+) as a cofactor.

The protein localises to the cell inner membrane. It catalyses the reaction UDP-N-acetyl-alpha-D-muramoyl-L-alanyl-gamma-D-glutamyl-meso-2,6-diaminopimeloyl-D-alanyl-D-alanine + di-trans,octa-cis-undecaprenyl phosphate = di-trans,octa-cis-undecaprenyl diphospho-N-acetyl-alpha-D-muramoyl-L-alanyl-D-glutamyl-meso-2,6-diaminopimeloyl-D-alanyl-D-alanine + UMP. The protein operates within cell wall biogenesis; peptidoglycan biosynthesis. Functionally, catalyzes the initial step of the lipid cycle reactions in the biosynthesis of the cell wall peptidoglycan: transfers peptidoglycan precursor phospho-MurNAc-pentapeptide from UDP-MurNAc-pentapeptide onto the lipid carrier undecaprenyl phosphate, yielding undecaprenyl-pyrophosphoryl-MurNAc-pentapeptide, known as lipid I. The chain is Phospho-N-acetylmuramoyl-pentapeptide-transferase from Stutzerimonas stutzeri (strain A1501) (Pseudomonas stutzeri).